The following is a 262-amino-acid chain: Glycine and serine-rich protein 1 (262 aa).

A signal peptide spans M1–C21. N-linked (GlcNAc...) asparagine glycosylation is present at N59. Positions S172–M212 are disordered. A compositionally biased stretch (gly residues) spans G174–G184. Positions G185–G203 are enriched in low complexity.

In terms of tissue distribution, component of the acid-insoluble and acid-soluble organic matrix of calcified layers of the shell (at protein level).

Its subcellular location is the secreted. This Lottia gigantea (Giant owl limpet) protein is Glycine and serine-rich protein 1.